An 845-amino-acid polypeptide reads, in one-letter code: Protein arginine N-methyltransferase 9 (845 aa).

TPR repeat units lie at residues 25 to 58 (VSRS…APEL), 67 to 100 (QYTL…FPDD), and 101 to 134 (EVIC…NPDF). SAM-dependent MTase PRMT-type domains are found at residues 137–466 (AKEN…YLRI) and 530–845 (NIPY…TVKQ).

The protein belongs to the class I-like SAM-binding methyltransferase superfamily. Protein arginine N-methyltransferase family. Found in a complex with PRMT9, SF3B2 and SF3B4. Interacts with SF3B2.

It is found in the cytoplasm. The enzyme catalyses L-arginyl-[protein] + 2 S-adenosyl-L-methionine = N(omega),N(omega)'-dimethyl-L-arginyl-[protein] + 2 S-adenosyl-L-homocysteine + 2 H(+). In terms of biological role, arginine methyltransferase that can both catalyze the formation of omega-N monomethylarginine (MMA) and symmetrical dimethylarginine (sDMA). Specifically mediates the symmetrical dimethylation of SF3B2. Involved in the regulation of alternative splicing of pre-mRNA. The polypeptide is Protein arginine N-methyltransferase 9 (Homo sapiens (Human)).